The sequence spans 167 residues: Peptide deformylase (167 aa).

Cys-90 and His-132 together coordinate Fe cation. Glu-133 is an active-site residue. His-136 is a Fe cation binding site.

Belongs to the polypeptide deformylase family. Requires Fe(2+) as cofactor.

It carries out the reaction N-terminal N-formyl-L-methionyl-[peptide] + H2O = N-terminal L-methionyl-[peptide] + formate. Functionally, removes the formyl group from the N-terminal Met of newly synthesized proteins. Requires at least a dipeptide for an efficient rate of reaction. N-terminal L-methionine is a prerequisite for activity but the enzyme has broad specificity at other positions. The protein is Peptide deformylase of Dehalococcoides mccartyi (strain CBDB1).